Consider the following 395-residue polypeptide: MSEPAENCSPRWKDEAIQNGYIPSYLDKDELCVVCGDKATGYHYRCITCEGCKGFFRRTIQKNLNPTYACKYEGKCVIDKVTRNQCQECRFKKCIAVGMATDLVLDDSKRLAKRKLIEENRERRRKEELQKTVWDRLEPTQEEWDLIRMVTEAHMATNAQGNHWKQKRKFLSAAGVKEDKPEEIGQASMANTPEGNKVDIEAFSQFTKIITPAITRVVDFAKKLPMFCELPCEDQIILLKGCCMEIMSLRAAVRYDPESETLTLNGEMAVTRGQLKNGGLGVVSDAIFDLGVSLSSFNLDDSEVALLQAVILLSSDRPGLSSVERIEPCQEEFLLAFEHYINYRKHKLAHFWPKLLMKVTDLRMIGACHASRFLHMKVECPTELFPPLFLEVFED.

The interval 1–31 (MSEPAENCSPRWKDEAIQNGYIPSYLDKDEL) is modulating. Positions 32, 35, 49, 52, 70, 76, 86, and 89 each coordinate Zn(2+). 2 NR C4-type zinc fingers span residues 32 to 52 (CVVC…CEGC) and 70 to 94 (CKYE…FKKC). The nuclear receptor DNA-binding region spans 32 to 99 (CVVCGDKATG…RFKKCIAVGM (68 aa)). One can recognise an NR LBD domain in the interval 142 to 395 (EEWDLIRMVT…PPLFLEVFED (254 aa)). 3,3',5-triiodo-L-thyronine contacts are provided by Arg216, Asn265, and His369. Residues Arg216, Asn265, and His369 each contribute to the L-thyroxine site.

This sequence belongs to the nuclear hormone receptor family. NR1 subfamily.

It localises to the nucleus. Its function is as follows. Nuclear hormone receptor that can act as a repressor or activator of transcription. High affinity receptor for thyroid hormones, including triiodothyronine and thyroxine. The chain is Thyroid hormone receptor beta (thrb) from Paralichthys olivaceus (Bastard halibut).